Reading from the N-terminus, the 317-residue chain is Probable cell division protein WhiA (317 aa).

Positions 276–310 (TLKELGEMVSGGKISKSGINHRLRKIDDIAEKLRA) form a DNA-binding region, H-T-H motif.

This sequence belongs to the WhiA family.

In terms of biological role, involved in cell division and chromosome segregation. This Bacillus thuringiensis (strain Al Hakam) protein is Probable cell division protein WhiA.